Here is a 427-residue protein sequence, read N- to C-terminus: Trigger factor (427 aa).

A PPIase FKBP-type domain is found at 163–248 (GDTVVIDFVG…IHEVKAKEVP (86 aa)).

The protein belongs to the FKBP-type PPIase family. Tig subfamily.

Its subcellular location is the cytoplasm. The catalysed reaction is [protein]-peptidylproline (omega=180) = [protein]-peptidylproline (omega=0). In terms of biological role, involved in protein export. Acts as a chaperone by maintaining the newly synthesized protein in an open conformation. Functions as a peptidyl-prolyl cis-trans isomerase. This is Trigger factor from Streptococcus pneumoniae (strain CGSP14).